A 283-amino-acid chain; its full sequence is 2-dehydro-3-deoxyphosphooctonate aldolase (283 aa).

Belongs to the KdsA family.

The protein localises to the cytoplasm. The enzyme catalyses D-arabinose 5-phosphate + phosphoenolpyruvate + H2O = 3-deoxy-alpha-D-manno-2-octulosonate-8-phosphate + phosphate. It participates in carbohydrate biosynthesis; 3-deoxy-D-manno-octulosonate biosynthesis; 3-deoxy-D-manno-octulosonate from D-ribulose 5-phosphate: step 2/3. Its pathway is bacterial outer membrane biogenesis; lipopolysaccharide biosynthesis. This chain is 2-dehydro-3-deoxyphosphooctonate aldolase, found in Shewanella frigidimarina (strain NCIMB 400).